Here is a 328-residue protein sequence, read N- to C-terminus: MDIAIIGATGYAGGELIRLLGMHSAAEVVCATSRRVEGTRVSAVHPQLNGFTDLSFTNPSVDEIEADVAFLAVPHTAGMQYVRALLERGIRVVDLSADYRLPQEIFEKVYGVTHTDYFAAPYGLPELHREEIRGKHFIANPGCFPTGATLAAAPLAAFADTIIYDSKSGVSGAGDNPSATTHFPNVADAITPYKMTTHRHLAEMKMELERLHAKAACYFTPHLLPVNRGILTTAHILLRDPLNQDQVERIYKDYYKDESFVRYQKPSIAAVRGSNFCDLIVESEGKRVVAVSAIDNLVKGASGQAIQNMNLMCGFKENDGLASAGLFP.

C143 is an active-site residue.

It belongs to the NAGSA dehydrogenase family. Type 1 subfamily.

Its subcellular location is the cytoplasm. The catalysed reaction is N-acetyl-L-glutamate 5-semialdehyde + phosphate + NADP(+) = N-acetyl-L-glutamyl 5-phosphate + NADPH + H(+). It participates in amino-acid biosynthesis; L-arginine biosynthesis; N(2)-acetyl-L-ornithine from L-glutamate: step 3/4. Functionally, catalyzes the NADPH-dependent reduction of N-acetyl-5-glutamyl phosphate to yield N-acetyl-L-glutamate 5-semialdehyde. The polypeptide is N-acetyl-gamma-glutamyl-phosphate reductase (Methanosphaerula palustris (strain ATCC BAA-1556 / DSM 19958 / E1-9c)).